The chain runs to 455 residues: Immunoglobulin alpha-2 heavy chain (455 aa).

Ig-like domains lie at 1–95, 121–213, 227–322, and 330–432; these read EVQL…VYYC, PKVF…QDVT, PRLS…ANIT, and PEVH…KTID. The segment at 1-115 is variable (V) domain, involved in antigen recognition; it reads EVQLVETGGG…GKGTTVTVSS (115 aa). 2 disulfides stabilise this stretch: cysteine 22–cysteine 95 and cysteine 141–cysteine 200. A constant (C) domain region spans residues 116 to 455; the sequence is ASPTSPKVFP…VMAEADGTCY (340 aa). Residues asparagine 162, asparagine 207, and asparagine 246 are each glycosylated (N-linked (GlcNAc...) asparagine). Intrachain disulfides connect cysteine 225/cysteine 282 and cysteine 249/cysteine 306. An N-linked (GlcNAc...) asparagine glycan is attached at asparagine 320. Cysteines 352 and 415 form a disulfide. Asparagine 442 is a glycosylation site (N-linked (GlcNAc...) asparagine).

Immunoglobulins are composed of two identical heavy chains and two identical light chains; disulfide-linked. Monomeric or polymeric.

The protein localises to the secreted. The protein resides in the cell membrane. Its function is as follows. Immunoglobulins, also known as antibodies, are membrane-bound or secreted glycoproteins produced by B lymphocytes. In the recognition phase of humoral immunity, the membrane-bound immunoglobulins serve as receptors which, upon binding of a specific antigen, trigger the clonal expansion and differentiation of B lymphocytes into immunoglobulins-secreting plasma cells. Secreted immunoglobulins mediate the effector phase of humoral immunity, which results in the elimination of bound antigens. The antigen binding site is formed by the variable domain of one heavy chain, together with that of its associated light chain. Thus, each immunoglobulin has two antigen binding sites with remarkable affinity for a particular antigen. The variable domains are assembled by a process called V-(D)-J rearrangement and can then be subjected to somatic hypermutations which, after exposure to antigen and selection, allow affinity maturation for a particular antigen. Ig alpha is the major immunoglobulin class in body secretions. This Homo sapiens (Human) protein is Immunoglobulin alpha-2 heavy chain.